A 722-amino-acid chain; its full sequence is Threonine--tRNA ligase 1, cytoplasmic (722 aa).

Polar residues predominate over residues M1–S10. Residues M1–P48 form a disordered region. Basic and acidic residues predominate over residues M13–K27. Residues D78 to K142 form the TGS domain. Position 242 is an N6-acetyllysine (K242). T245 is subject to Phosphothreonine. Y297 carries the phosphotyrosine modification. At T452 the chain carries Phosphothreonine.

It belongs to the class-II aminoacyl-tRNA synthetase family. Homodimer. In terms of processing, ISGylated.

The protein resides in the cytoplasm. It catalyses the reaction tRNA(Thr) + L-threonine + ATP = L-threonyl-tRNA(Thr) + AMP + diphosphate + H(+). In terms of biological role, catalyzes the attachment of threonine to tRNA(Thr) in a two-step reaction: threonine is first activated by ATP to form Thr-AMP and then transferred to the acceptor end of tRNA(Thr). Also edits incorrectly charged tRNA(Thr) via its editing domain, at the post-transfer stage. The polypeptide is Threonine--tRNA ligase 1, cytoplasmic (Tars1) (Mus musculus (Mouse)).